Reading from the N-terminus, the 865-residue chain is FO synthase (865 aa).

The interval 1 to 21 (MIEGVTELATPNVPPAPPSPS) is disordered. 2 consecutive Radical SAM core domains span residues 76-320 (ITYS…LGPD) and 544-785 (VTYV…DNIQ). The tract at residues 77–409 (TYSRNVFIPL…PRIGAHVAAL (333 aa)) is cofG-like. [4Fe-4S] cluster-binding residues include C90, C94, C97, C558, C562, and C565. The cofH-like stretch occupies residues 521–854 (DGAELDAVAA…RERTTVYGRV (334 aa)).

It in the N-terminal section; belongs to the radical SAM superfamily. CofG family. This sequence in the C-terminal section; belongs to the radical SAM superfamily. CofH family. [4Fe-4S] cluster serves as cofactor.

It catalyses the reaction 5-amino-6-(D-ribitylamino)uracil + L-tyrosine + S-adenosyl-L-methionine = 5-amino-5-(4-hydroxybenzyl)-6-(D-ribitylimino)-5,6-dihydrouracil + 2-iminoacetate + 5'-deoxyadenosine + L-methionine + H(+). The enzyme catalyses 5-amino-5-(4-hydroxybenzyl)-6-(D-ribitylimino)-5,6-dihydrouracil + S-adenosyl-L-methionine = 7,8-didemethyl-8-hydroxy-5-deazariboflavin + 5'-deoxyadenosine + L-methionine + NH4(+) + H(+). The protein operates within cofactor biosynthesis; coenzyme F0 biosynthesis. Catalyzes the radical-mediated synthesis of 7,8-didemethyl-8-hydroxy-5-deazariboflavin (FO) from 5-amino-6-(D-ribitylamino)uracil and L-tyrosine. This chain is FO synthase (fbiC), found in Nocardia farcinica (strain IFM 10152).